The sequence spans 326 residues: Glycerol-3-phosphate dehydrogenase [NAD(P)+] (326 aa).

Residues Trp15, Arg35, and Lys107 each coordinate NADPH. The sn-glycerol 3-phosphate site is built by Lys107, Gly135, and Ser137. Ala139 contacts NADPH. Sn-glycerol 3-phosphate is bound by residues Lys190, Asp243, Ser253, Arg254, and Asn255. Residue Lys190 is the Proton acceptor of the active site. Arg254 contacts NADPH. The NADPH site is built by Leu273 and Glu275.

The protein belongs to the NAD-dependent glycerol-3-phosphate dehydrogenase family.

Its subcellular location is the cytoplasm. The enzyme catalyses sn-glycerol 3-phosphate + NAD(+) = dihydroxyacetone phosphate + NADH + H(+). It carries out the reaction sn-glycerol 3-phosphate + NADP(+) = dihydroxyacetone phosphate + NADPH + H(+). Its pathway is membrane lipid metabolism; glycerophospholipid metabolism. Functionally, catalyzes the reduction of the glycolytic intermediate dihydroxyacetone phosphate (DHAP) to sn-glycerol 3-phosphate (G3P), the key precursor for phospholipid synthesis. This is Glycerol-3-phosphate dehydrogenase [NAD(P)+] from Bradyrhizobium sp. (strain BTAi1 / ATCC BAA-1182).